The primary structure comprises 1409 residues: DNA-directed RNA polymerase subunit beta' (1409 aa).

Positions 69, 71, 84, and 87 each coordinate Zn(2+). Aspartate 461, aspartate 463, and aspartate 465 together coordinate Mg(2+). Residues cysteine 805, cysteine 879, cysteine 886, and cysteine 889 each coordinate Zn(2+).

The protein belongs to the RNA polymerase beta' chain family. In terms of assembly, the RNAP catalytic core consists of 2 alpha, 1 beta, 1 beta' and 1 omega subunit. When a sigma factor is associated with the core the holoenzyme is formed, which can initiate transcription. Mg(2+) serves as cofactor. Zn(2+) is required as a cofactor.

It carries out the reaction RNA(n) + a ribonucleoside 5'-triphosphate = RNA(n+1) + diphosphate. DNA-dependent RNA polymerase catalyzes the transcription of DNA into RNA using the four ribonucleoside triphosphates as substrates. This Anaplasma phagocytophilum (strain HZ) protein is DNA-directed RNA polymerase subunit beta'.